A 676-amino-acid chain; its full sequence is SPARC-like protein 1 (676 aa).

The N-terminal stretch at 1–16 (MKTVLLLICLLGSAFT) is a signal peptide. Basic and acidic residues predominate over residues 35 to 44 (EKHKYTHSEM). Disordered regions lie at residues 35-151 (EKHK…WALR), 173-369 (NTVG…GVYR), and 385-437 (SEDN…RNST). A compositionally biased stretch (polar residues) spans 95 to 108 (KNSLRSINFLTLHS). Asparagine 182 carries N-linked (GlcNAc...) asparagine glycosylation. The segment covering 184 to 202 (SEEEEAGEEEDEEWGEETD) has biased composition (acidic residues). 2 stretches are compositionally biased toward basic and acidic residues: residues 249–266 (EKFSMEEESQEKLYKEGK) and 273–291 (NHNEDQGEKRQSEESKEHF). Over residues 312–328 (NAEEDDNDSGDDGEEDL) the composition is skewed to acidic residues. N-linked (GlcNAc...) asparagine glycosylation occurs at asparagine 318. The segment covering 385-394 (SEDNHYHHEP) has biased composition (basic and acidic residues). Asparagine 396 carries N-linked (GlcNAc...) asparagine glycosylation. The segment covering 397 to 408 (SSSKQQLQTSSS) has biased composition (low complexity). Residue asparagine 413 is glycosylated (N-linked (GlcNAc...) asparagine). Basic and acidic residues predominate over residues 415 to 433 (TEHEDEVKTTGGSYHEESA). N-linked (GlcNAc...) asparagine glycosylation occurs at asparagine 435. The 23-residue stretch at 444–466 (LCRNFHCKRGKVCQADKQGKPSC) folds into the Follistatin-like domain. 7 disulfide bridges follow: cysteine 445–cysteine 456, cysteine 450–cysteine 466, cysteine 468–cysteine 502, cysteine 474–cysteine 495, cysteine 484–cysteine 521, cysteine 527–cysteine 638, and cysteine 646–cysteine 662. Residues 462 to 523 (GKPSCICQDP…HLDYMGACKH (62 aa)) form the Kazal-like domain. N-linked (GlcNAc...) asparagine glycosylation occurs at asparagine 488. Residues 634–669 (PMEHCITRFFQECDGDQDKLITLKEWCHCFAIKEED) enclose the EF-hand domain. Residues aspartate 647, aspartate 649, aspartate 651, and glutamate 658 each coordinate Ca(2+).

It belongs to the SPARC family. Glial (Mueller) cells of the neuroretina.

Its subcellular location is the secreted. The protein localises to the extracellular space. It localises to the extracellular matrix. Its function is as follows. Could play a role in the late stage of neuroretina morphogenesis. This is SPARC-like protein 1 (SPARCL1) from Coturnix japonica (Japanese quail).